Reading from the N-terminus, the 60-residue chain is Homeobox protein engrailed-like B (60 aa).

The homeobox DNA-binding region spans 1–41 (VEQLQRLKSEFGASRYLTEARRQALAQELRLNEAQIKIWFQ).

The protein belongs to the engrailed homeobox family.

Its subcellular location is the nucleus. This chain is Homeobox protein engrailed-like B, found in Myxine glutinosa (Atlantic hagfish).